The primary structure comprises 600 residues: NADH-quinone oxidoreductase subunit C/D (600 aa).

The tract at residues 1 to 190 is NADH dehydrogenase I subunit C; that stretch reads MVNNMTDLTA…SPFELTKAKQ (190 aa). Positions 214-600 are NADH dehydrogenase I subunit D; the sequence is DFMFLNLGPN…IDFVMSDVDR (387 aa).

The protein in the N-terminal section; belongs to the complex I 30 kDa subunit family. In the C-terminal section; belongs to the complex I 49 kDa subunit family. In terms of assembly, NDH-1 is composed of 13 different subunits. Subunits NuoB, CD, E, F, and G constitute the peripheral sector of the complex.

It is found in the cell inner membrane. The catalysed reaction is a quinone + NADH + 5 H(+)(in) = a quinol + NAD(+) + 4 H(+)(out). NDH-1 shuttles electrons from NADH, via FMN and iron-sulfur (Fe-S) centers, to quinones in the respiratory chain. The immediate electron acceptor for the enzyme in this species is believed to be ubiquinone. Couples the redox reaction to proton translocation (for every two electrons transferred, four hydrogen ions are translocated across the cytoplasmic membrane), and thus conserves the redox energy in a proton gradient. This chain is NADH-quinone oxidoreductase subunit C/D, found in Escherichia coli O157:H7.